The primary structure comprises 1612 residues: DNA topoisomerase 2-beta (1612 aa).

Residue Ala2 is modified to N-acetylalanine. An N6-acetyllysine modification is found at Lys3. Glycyl lysine isopeptide (Lys-Gly) (interchain with G-Cter in SUMO2) cross-links involve residues Lys21 and Lys22. ATP-binding positions include Asn100, Asn129, and 157–159 (SSN). Residues Lys165 and Lys166 each participate in a glycyl lysine isopeptide (Lys-Gly) (interchain with G-Cter in SUMO2) cross-link. An ATP-binding site is contributed by 170–177 (GRNGYGAK). Glycyl lysine isopeptide (Lys-Gly) (interchain with G-Cter in SUMO2) cross-links involve residues Lys216 and Lys287. The interval 351–353 (KKK) is interaction with DNA. Glycyl lysine isopeptide (Lys-Gly) (interchain with G-Cter in SUMO2) cross-links involve residues Lys355 and Lys361. 385–387 (QTK) is an ATP binding site. Glycyl lysine isopeptide (Lys-Gly) (interchain with G-Cter in SUMO2) cross-links involve residues Lys425, Lys427, and Lys434. The region spanning 464-581 (CTLILTEGDS…SLLKHGFLEE (118 aa)) is the Toprim domain. 3 residues coordinate Mg(2+): Glu470, Asp550, and Asp552. Glycyl lysine isopeptide (Lys-Gly) (interchain with G-Cter in SUMO2) cross-links involve residues Lys588, Lys593, Lys623, Lys631, Lys634, Lys664, and Lys700. The region spanning 724 to 1177 (IPSLVDGFKP…SPSDLWKEDL (454 aa)) is the Topo IIA-type catalytic domain. Tyr814 (O-(5'-phospho-DNA)-tyrosine intermediate) is an active-site residue. Residues 999–1008 (KLQTTLTCNS) are interaction with DNA. A Glycyl lysine isopeptide (Lys-Gly) (interchain with G-Cter in SUMO2) cross-link involves residue Lys1080. The tract at residues 1098–1128 (AWKEAQEKAAEEEDSQNQHDDSSSDSGTPSG) is disordered. Glycyl lysine isopeptide (Lys-Gly) (interchain with G-Cter in SUMO2) cross-links involve residues Lys1202, Lys1205, Lys1214, and Lys1215. Ser1224 carries the phosphoserine modification. Glycyl lysine isopeptide (Lys-Gly) (interchain with G-Cter in SUMO2) cross-links involve residues Lys1238, Lys1250, and Lys1259. The interval 1245-1586 (LLKKKKGDPD…FTSEPPALPR (342 aa)) is disordered. The residue at position 1280 (Thr1280) is a Phosphothreonine. Glycyl lysine isopeptide (Lys-Gly) (interchain with G-Cter in SUMO2) cross-links involve residues Lys1311 and Lys1315. 2 stretches are compositionally biased toward basic and acidic residues: residues 1322–1332 (PWSDDESKSES) and 1346–1358 (SLLRRAAAERPKY). Phosphoserine is present on residues Ser1324, Ser1328, Ser1330, Ser1332, and Ser1346. Tyr1358 carries the post-translational modification Phosphotyrosine. Positions 1362–1379 (FSEEEDDDAAAADDSNDL) are enriched in acidic residues. Residues Ser1363 and Ser1376 each carry the phosphoserine modification. Lys1385 is covalently cross-linked (Glycyl lysine isopeptide (Lys-Gly) (interchain with G-Cter in SUMO2)). The residue at position 1387 (Ser1387) is a Phosphoserine. At Thr1390 the chain carries Phosphothreonine. Position 1400 is a phosphoserine (Ser1400). Tyr1408 carries the post-translational modification Phosphotyrosine. A Phosphoserine modification is found at Ser1411. Residues 1417 to 1429 (ATPEKSSNDKKSQ) show a composition bias toward basic and acidic residues. Residue Lys1427 forms a Glycyl lysine isopeptide (Lys-Gly) (interchain with G-Cter in SUMO2) linkage. A phosphoserine mark is found at Ser1428, Ser1439, and Ser1441. A Glycyl lysine isopeptide (Lys-Gly) (interchain with G-Cter in SUMO2) cross-link involves residue Lys1443. Positions 1443 to 1453 (KSEDDSAKFDS) are enriched in basic and acidic residues. 3 positions are modified to phosphoserine: Ser1448, Ser1453, and Ser1460. Lys1477 participates in a covalent cross-link: Glycyl lysine isopeptide (Lys-Gly) (interchain with G-Cter in SUMO2). Residues 1493–1499 (KAKRAPK) form an interaction with PLSCR1 region. Phosphoserine occurs at positions 1509, 1511, and 1513. Positions 1526 to 1536 (GKGRGAKKRKA) are enriched in basic residues. Ser1537 and Ser1539 each carry phosphoserine. The span at 1550–1561 (KPSKTASKKPKK) shows a compositional bias: basic residues. A Phosphothreonine modification is found at Thr1562. Phosphoserine is present on residues Ser1563 and Ser1568. Residue Tyr1596 is modified to Phosphotyrosine. Phosphoserine is present on Ser1600.

Belongs to the type II topoisomerase family. In terms of assembly, homodimer. Interacts with KIAA1210. Interacts with PLSCR1. Mg(2+) is required as a cofactor. Requires Mn(2+) as cofactor. Ca(2+) serves as cofactor.

The protein localises to the nucleus. Its subcellular location is the nucleolus. The protein resides in the nucleoplasm. The enzyme catalyses ATP-dependent breakage, passage and rejoining of double-stranded DNA.. Key decatenating enzyme that alters DNA topology by binding to two double-stranded DNA molecules, generating a double-stranded break in one of the strands, passing the intact strand through the broken strand, and religating the broken strand. Plays a role in B-cell differentiation. The sequence is that of DNA topoisomerase 2-beta (Top2b) from Mus musculus (Mouse).